The following is a 328-amino-acid chain: GTPase Obg (328 aa).

Positions 2-160 constitute an Obg domain; that stretch reads YNFKDSVSIT…LNVRLELFLV (159 aa). Residues 161–326 enclose the OBG-type G domain; that stretch reads ADIGLVGLPN…LIKEFFVLAK (166 aa). Residues 167–174, 192–196, 213–216, 280–283, and 307–309 contribute to the GTP site; these read GLPNAGKS, FTTKI, DIPG, NKLD, and SIY. Mg(2+)-binding residues include S174 and T194.

This sequence belongs to the TRAFAC class OBG-HflX-like GTPase superfamily. OBG GTPase family. As to quaternary structure, monomer. The cofactor is Mg(2+).

The protein localises to the cytoplasm. Functionally, an essential GTPase which binds GTP, GDP and possibly (p)ppGpp with moderate affinity, with high nucleotide exchange rates and a fairly low GTP hydrolysis rate. Plays a role in control of the cell cycle, stress response, ribosome biogenesis and in those bacteria that undergo differentiation, in morphogenesis control. This is GTPase Obg from Borreliella afzelii (strain PKo) (Borrelia afzelii).